A 1386-amino-acid chain; its full sequence is DNA-directed RNA polymerase subunit beta' (1386 aa).

Positions 75, 77, 90, and 93 each coordinate Zn(2+). Mg(2+) contacts are provided by aspartate 466, aspartate 468, and aspartate 470. Residues cysteine 809, cysteine 883, cysteine 890, and cysteine 893 each coordinate Zn(2+).

Belongs to the RNA polymerase beta' chain family. As to quaternary structure, the RNAP catalytic core consists of 2 alpha, 1 beta, 1 beta' and 1 omega subunit. When a sigma factor is associated with the core the holoenzyme is formed, which can initiate transcription. Mg(2+) serves as cofactor. Zn(2+) is required as a cofactor.

It catalyses the reaction RNA(n) + a ribonucleoside 5'-triphosphate = RNA(n+1) + diphosphate. Functionally, DNA-dependent RNA polymerase catalyzes the transcription of DNA into RNA using the four ribonucleoside triphosphates as substrates. This is DNA-directed RNA polymerase subunit beta' from Oleidesulfovibrio alaskensis (strain ATCC BAA-1058 / DSM 17464 / G20) (Desulfovibrio alaskensis).